Consider the following 244-residue polypeptide: Myrosinase MB1 (244 aa).

A glycan (N-linked (GlcNAc...) asparagine) is linked at Asn-32. Tyr-51 is a substrate binding site. Catalysis depends on Glu-125, which acts as the Nucleophile. Residues Trp-173 and 180-181 (EF) contribute to the substrate site. Asn-216 is a glycosylation site (N-linked (GlcNAc...) asparagine).

This sequence belongs to the glycosyl hydrolase 1 family. In terms of assembly, homodimer. As to expression, in vacuoles called myrosin grains of a certain class of cells, myrosin cells, distributed in the cotyledons and the axis of the embryo as well as in different organs of the growing plant.

The protein resides in the vacuole. It carries out the reaction a thioglucoside + H2O = a sugar + a thiol.. Degradation of glucosinolates (glucose residue linked by a thioglucoside bound to an amino acid derivative) to glucose, sulfate and any of the products: thiocyanates, isothiocyanates, nitriles, epithionitriles or oxazolidine-2-thiones. This Sinapis alba (White mustard) protein is Myrosinase MB1.